The primary structure comprises 476 residues: Protein transport protein Sec61 subunit alpha (476 aa).

The Cytoplasmic segment spans residues 2-33; sequence GIKFLEVIKPFCAVLPEIQKPERKIQFREKVL. The helical transmembrane segment at 34–53 threads the bilayer; that stretch reads WTAITLFIFLVCCQIPLFGI. Over 54–76 the chain is Lumenal; it reads MSSDSADPFYWMRVILASNRGTL. The helical transmembrane segment at 77–96 threads the bilayer; sequence MELGISPIVTSGLIMQLLAG. The Cytoplasmic portion of the chain corresponds to 97–117; sequence AKIIGVGDTPKDRALFNGAQK. Residues 118–138 traverse the membrane as a helical segment; it reads LFGMIITIGQAIVYVMTGMYG. The Lumenal portion of the chain corresponds to 139–144; the sequence is DPSEMG. Residues 145–165 traverse the membrane as a helical segment; sequence AGICLLIIIQLFVAGLIVLLL. Residues 166–172 lie on the Cytoplasmic side of the membrane; that stretch reads DELLQKG. A helical transmembrane segment spans residues 173-193; the sequence is YGLGSGISLFIATNICETIVW. The Lumenal segment spans residues 194–240; that stretch reads KAFSPTTVNTGRGTEFEGAIIALFHLLATRTDKVRALREGFYRQNLP. A helical membrane pass occupies residues 241 to 261; it reads NLMNLIATVFVFAVVIYFQGF. Over 262-288 the chain is Cytoplasmic; that stretch reads RVDLPIKSARYRGQYNTYPIKLFYTSN. Residues 289 to 309 form a helical membrane-spanning segment; the sequence is IPIILQSALVSNLYVISQMLS. Topologically, residues 310 to 354 are lumenal; sequence TRFSGNFLVNLLGTWSDATSGGPARAYPVAGLCYYLSPPESFGSV. The helical transmembrane segment at 355–375 threads the bilayer; that stretch reads LDDPVHAGIYIVFMLGSCAFF. Residues 376–420 lie on the Cytoplasmic side of the membrane; the sequence is SKTWIEVSGSSAKDVAKQLKEQQMVMRGHRETSMVHELNRYIPTA. The helical transmembrane segment at 421 to 441 threads the bilayer; it reads AAFGGLCIGGLSVMADFLGAI. The Lumenal segment spans residues 442–445; sequence GSGT. Residues 446–462 traverse the membrane as a helical segment; that stretch reads GILLAVTIIYQYFEIFV. Over 463-476 the chain is Cytoplasmic; it reads KEQSEVGSMGALLF.

Belongs to the SecY/SEC61-alpha family. The SEC61 channel-forming translocon complex consists of channel-forming core components SEC61A1, SEC61B and SEC61G and different auxiliary components such as SEC62 and SEC63. The SEC61 channel associates with the multi-pass translocon (MPT) complex.

The protein resides in the endoplasmic reticulum membrane. In terms of biological role, component of SEC61 channel-forming translocon complex that mediates transport of signal peptide-containing precursor polypeptides across the endoplasmic reticulum (ER). Forms a ribosome receptor and a gated pore in the ER membrane, both functions required for cotranslational translocation of nascent polypeptides. May cooperate with auxiliary protein SEC62, SEC63 and HSPA5/BiP to enable post-translational transport of small presecretory proteins. The SEC61 channel is also involved in ER membrane insertion of transmembrane proteins: it mediates membrane insertion of the first few transmembrane segments of proteins, while insertion of subsequent transmembrane regions of multi-pass membrane proteins is mediated by the multi-pass translocon (MPT) complex. This chain is Protein transport protein Sec61 subunit alpha (sec61a), found in Hemitripterus americanus (Sea raven).